The primary structure comprises 110 residues: Large ribosomal subunit protein P2 (110 aa).

Serine 59 carries the O-(pantetheine 4'-phosphoryl)serine; in acyl carrier protein form modification. The tract at residues 62–110 (LASVPSGGAAPAAAAGGAAAGGAAEEKAEDKPAEKDEESDDDMGFGLFD) is disordered. Low complexity predominate over residues 63–84 (ASVPSGGAAPAAAAGGAAAGGA). The segment covering 85–95 (AEEKAEDKPAE) has biased composition (basic and acidic residues). Serine 100 is subject to Phosphoserine; in ribosomal stalk form.

The protein belongs to the eukaryotic ribosomal protein P1/P2 family. The phosphorylated form is part of the ribosomal stalk involved in the interaction of the elongation factors with the ribosome during protein synthesis. The phosphopantetheinylated form is part of the 10S triacylglycerol biosynthetic complex involved in de novo fatty acid biosynthesis. 4'-phosphopantetheine is transferred from CoA to a specific serine by acpS. This modification is essential for activity because fatty acids are bound in thioester linkage to the sulfhydryl of the prosthetic group.

The protein resides in the cytoplasm. In terms of biological role, probable bifunctional protein. The phosphorylated protein plays an important role in the elongation step of protein synthesis. The phosphopantetheinylated protein acts as an acyl carrier protein. This is Large ribosomal subunit protein P2 from Rhodotorula glutinis (Yeast).